The following is a 208-amino-acid chain: Guanylate kinase (208 aa).

Positions 4 to 185 (GNLYILSAPS…ALADFQAILR (182 aa)) constitute a Guanylate kinase-like domain. 11-18 (APSGAGKS) is a binding site for ATP.

It belongs to the guanylate kinase family.

The protein resides in the cytoplasm. It catalyses the reaction GMP + ATP = GDP + ADP. Its function is as follows. Essential for recycling GMP and indirectly, cGMP. The polypeptide is Guanylate kinase (gmk) (Pasteurella multocida (strain Pm70)).